The sequence spans 310 residues: MERWAAPKVTAGSARRYVADQPSFSSTLLDAIYKSMDEQPGHGGGATGVEAVAAAAKKQHEAALHYGNYYKPSLAGSYRARAPGPHATTSSSSECSSYGGFSSSEAESSHHRRLRPIRTTVPGGAPGPAPEKKAKKPGASIRAKLRDLRKPASPGARLAGFLNSIFAGKRAPATPPSATAGAESACSTASSYSRSCLSKTPSTRGQAKRTVRFLDSDTESLASSTVVDRRRVPVEAVQQMLLQRMEMESDEDDDESSDASSDLFELENFAAIAPAGAAYRDELPVYETTRVALNRAIGHGYGHGRSARVV.

A disordered region spans residues 77 to 140 (SYRARAPGPH…EKKAKKPGAS (64 aa)). Over residues 90–106 (SSSSECSSYGGFSSSEA) the composition is skewed to low complexity.

It belongs to the BIG GRAIN 1 (BG1) plant protein family. Mostly expressed in the vascular tissues of leaves, culms and young panicles, especially in hulls.

The protein resides in the cell membrane. Involved in auxin transport. Positive regulator of the auxin signaling pathway involved in gravitropism, plant growth and grain development. This Oryza sativa subsp. japonica (Rice) protein is Protein BIG GRAIN 1.